The primary structure comprises 613 residues: Dihydroxy-acid dehydratase (613 aa).

Aspartate 81 is a Mg(2+) binding site. Cysteine 122 is a binding site for [2Fe-2S] cluster. Mg(2+) is bound by residues aspartate 123 and lysine 124. Lysine 124 is subject to N6-carboxylysine. Residue cysteine 195 participates in [2Fe-2S] cluster binding. Glutamate 491 contributes to the Mg(2+) binding site. The Proton acceptor role is filled by serine 517.

The protein belongs to the IlvD/Edd family. As to quaternary structure, homodimer. It depends on [2Fe-2S] cluster as a cofactor. The cofactor is Mg(2+).

The enzyme catalyses (2R)-2,3-dihydroxy-3-methylbutanoate = 3-methyl-2-oxobutanoate + H2O. It catalyses the reaction (2R,3R)-2,3-dihydroxy-3-methylpentanoate = (S)-3-methyl-2-oxopentanoate + H2O. It participates in amino-acid biosynthesis; L-isoleucine biosynthesis; L-isoleucine from 2-oxobutanoate: step 3/4. Its pathway is amino-acid biosynthesis; L-valine biosynthesis; L-valine from pyruvate: step 3/4. Functionally, functions in the biosynthesis of branched-chain amino acids. Catalyzes the dehydration of (2R,3R)-2,3-dihydroxy-3-methylpentanoate (2,3-dihydroxy-3-methylvalerate) into 2-oxo-3-methylpentanoate (2-oxo-3-methylvalerate) and of (2R)-2,3-dihydroxy-3-methylbutanoate (2,3-dihydroxyisovalerate) into 2-oxo-3-methylbutanoate (2-oxoisovalerate), the penultimate precursor to L-isoleucine and L-valine, respectively. The polypeptide is Dihydroxy-acid dehydratase (Vibrio vulnificus (strain YJ016)).